Reading from the N-terminus, the 304-residue chain is MNRAFSRKKDKTWMHTPEALSKHYIPYNAKFLGSTEVEQPKGTEVVRDAVRKLKFARHIKKSEGQKIPKVELQISIYGVKILEPKTKEVQHNCQLHRISFCADDKTDKRIFTFICKDSESNKHLCFVFDSEKCAEEITLTIGQAFDLAYRKFLESGGKDVETRKQIAGMQKRIQDLETENMELKNKVQDLESRLRTTQVSTSPAHGVTVMSPSTDIFDMIPFSPISHQSPTSARNGTQLPPIPSRSAETKRDLFGAEPFDPFNCGSGDFPPDIQSKLDEMQEGFKMGLTLEGTVFCLDPLDSRC.

Thr-16 is modified (phosphothreonine). One can recognise a PID domain in the interval 21–176; it reads SKHYIPYNAK…AGMQKRIQDL (156 aa). Residues 159–200 adopt a coiled-coil conformation; that stretch reads DVETRKQIAGMQKRIQDLETENMELKNKVQDLESRLRTTQVS. Ser-223 bears the Phosphoserine mark.

This sequence belongs to the ced-6 family. As to quaternary structure, homodimer. Interacts with clathrin and MEGF10. Interacts with GDP-bound ARF6, but not with GTP-bound ARF6. Part of a complex composed of GULP1, ACAP1 and ARF6. Interacts with ACAP1, LRP1 and STAB2. Detected throughout the brain, particularly in Purkinje cells, hippocampal and cortical neurons (at protein level).

Its subcellular location is the cytoplasm. Modulates cellular glycosphingolipid and cholesterol transport. May play a role in the internalization of various LRP1 ligands, such as PSAP. May function as an adapter protein. Required for efficient phagocytosis of apoptotic cells. Increases cellular levels of GTP-bound ARF6. This chain is PTB domain-containing engulfment adapter protein 1 (Gulp1), found in Mus musculus (Mouse).